Reading from the N-terminus, the 289-residue chain is Pteridine reductase 1 (289 aa).

14 to 41 (GAAKRLGSSIAEALHAEGYTVCLHYHRS) is an NADP(+) binding site. Serine 176 contributes to the substrate binding site. Tyrosine 195 (proton acceptor) is an active-site residue. Residue 195–199 (YTMAK) coordinates NADP(+).

This sequence belongs to the short-chain dehydrogenases/reductases (SDR) family. In terms of assembly, homotetramer.

The enzyme catalyses (6R)-L-erythro-5,6,7,8-tetrahydrobiopterin + 2 NADP(+) = L-erythro-biopterin + 2 NADPH + 2 H(+). The protein operates within cofactor biosynthesis; tetrahydrobiopterin biosynthesis; tetrahydrobiopterin from biopterin: step 1/1. Exhibits a NADPH-dependent biopterin reductase activity. Has good activity with folate and significant activity with dihydrofolate and dihydrobiopterin, but not with quinonoid dihydrobiopterin. Confers resistance to methotrexate (MTX). The protein is Pteridine reductase 1 (PTR1) of Leishmania tarentolae (Sauroleishmania tarentolae).